A 416-amino-acid chain; its full sequence is Advanced glycosylation end product-specific receptor (416 aa).

Residues 1 to 22 (MAAGAVVGAWMLVLSLGGTVTG) form the signal peptide. The region spanning 23-115 (DQNITARIGK…KETKSNYRVR (93 aa)) is the Ig-like V-type domain. Over 23 to 352 (DQNITARIGK…VEGPGLETLA (330 aa)) the chain is Extracellular. N-linked (GlcNAc...) asparagine glycosylation is found at Asn-25 and Asn-80. Cystine bridges form between Cys-38/Cys-98 and Cys-143/Cys-207. Ig-like C2-type domains are found at residues 123–220 (PEIV…RALH) and 238–327 (PNVD…RAVS). The helical transmembrane segment at 353 to 373 (LTLGILGGLGTVALLIGVIVW) threads the bilayer. Residues 374–416 (HRRRQRKGQERKVPENQEEEEEERAELNQPEEPEAAESSTGGP) are Cytoplasmic-facing. The interval 377-416 (RQRKGQERKVPENQEEEEEERAELNQPEEPEAAESSTGGP) is disordered. Positions 389 to 408 (NQEEEEEERAELNQPEEPEA) are enriched in acidic residues.

As to quaternary structure, constitutive homodimer; disulfide-linked. Forms homooligomers. Interacts with S100A1 and APP. Interacts with S100B, S100A12 and S100A14. Interacts with TIRAP. Interacts with HMGB1. Interacts with LGP2; this interaction plays an important role in AGER-mediated pro-inflammatory responses and cytokine release. Interacts with double-strand break repair protein MRE11 which is a core component of the MRN complex; the interaction enhances MRE11 endonuclease activity and promotes DNA repair. Interacts with the MCM2-7 complex via interaction with complex member MCM2; the interaction is increased following DNA replication stress and stabilizes the MCM2-7 complex at replication forks. Post-translationally, phosphorylated on its cytoplasmic domain by PKCzeta/PRKCZ upon ligand binding. Phosphorylated by ATM following DNA damage. In terms of processing, targeted by the ubiquitin E3 ligase subunit FBXO10 to mediate its ubiquitination and degradation. As to expression, endothelial cells.

The protein localises to the cell membrane. The protein resides in the cell projection. It localises to the phagocytic cup. Its subcellular location is the early endosome. It is found in the nucleus. In terms of biological role, cell surface pattern recognition receptor that senses endogenous stress signals with a broad ligand repertoire including advanced glycation end products, S100 proteins, high-mobility group box 1 protein/HMGB1, amyloid beta/APP oligomers, nucleic acids, histones, phospholipids and glycosaminoglycans. Advanced glycosylation end products are nonenzymatically glycosylated proteins which accumulate in vascular tissue in aging and at an accelerated rate in diabetes. These ligands accumulate at inflammatory sites during the pathogenesis of various diseases including diabetes, vascular complications, neurodegenerative disorders and cancers, and RAGE transduces their binding into pro-inflammatory responses. Upon ligand binding, uses TIRAP and MYD88 as adapters to transduce the signal ultimately leading to the induction of inflammatory cytokines IL6, IL8 and TNFalpha through activation of NF-kappa-B. Interaction with S100A12 on endothelium, mononuclear phagocytes, and lymphocytes triggers cellular activation, with generation of key pro-inflammatory mediators. Interaction with S100B after myocardial infarction may play a role in myocyte apoptosis by activating ERK1/2 and p53/TP53 signaling. Contributes to the translocation of amyloid-beta peptide (ABPP) across the cell membrane from the extracellular to the intracellular space in cortical neurons. ABPP-initiated RAGE signaling, especially stimulation of p38 mitogen-activated protein kinase (MAPK), has the capacity to drive a transport system delivering ABPP as a complex with RAGE to the intraneuronal space. Participates in endothelial albumin transcytosis together with HMGB1 through the RAGE/SRC/Caveolin-1 pathway, leading to endothelial hyperpermeability. Mediates the loading of HMGB1 in extracellular vesicles (EVs) that shuttle HMGB1 to hepatocytes by transferrin-mediated endocytosis and subsequently promote hepatocyte pyroptosis by activating the NLRP3 inflammasome. Binds to DNA and promotes extracellular hypomethylated DNA (CpG DNA) uptake by cells via the endosomal route to activate inflammatory responses. Mediates phagocytosis by non-professional phagocytes (NPP) and this is enhanced by binding to ligands including RNA, DNA, HMGB1 and histones. Promotes NPP-mediated phagocytosis of Saccharomyces cerevisiae spores by binding to RNA attached to the spore wall. Also promotes NPP-mediated phagocytosis of apoptotic cells. Following DNA damage, recruited to DNA double-strand break sites where it colocalizes with the MRN repair complex via interaction with double-strand break repair protein MRE11. Enhances the endonuclease activity of MRE11, promoting the end resection of damaged DNA. Promotes DNA damage repair in trophoblasts which enhances trophoblast invasion and contributes to placental development and maintenance. Protects cells from DNA replication stress by localizing to damaged replication forks where it stabilizes the MCM2-7 complex and promotes faithful progression of the replication fork. This is Advanced glycosylation end product-specific receptor (AGER) from Bos taurus (Bovine).